A 79-amino-acid polypeptide reads, in one-letter code: Cytoinsectotoxin-3 (79 aa).

The protein belongs to the cationic peptide 06 (cytoinsectotoxin) family. As to expression, expressed by the venom gland.

The protein localises to the secreted. Functionally, insecticidal and antimicrobial peptide. Has insecticidal activity against larvae of flesh fly S.carnaria. Has antibacterial activity against Gram-positive bacterium B.subtilis B-501 (MIC=0.63 uM) and Gram-negative bacterium E.coli DH5alpha (MIC=2.5 uM). The polypeptide is Cytoinsectotoxin-3 (Lachesana tarabaevi (Spider)).